A 191-amino-acid chain; its full sequence is dTTP/UTP pyrophosphatase (191 aa).

The Proton acceptor role is filled by aspartate 69.

It belongs to the Maf family. YhdE subfamily. The cofactor is a divalent metal cation.

The protein resides in the cytoplasm. It carries out the reaction dTTP + H2O = dTMP + diphosphate + H(+). The enzyme catalyses UTP + H2O = UMP + diphosphate + H(+). Its function is as follows. Nucleoside triphosphate pyrophosphatase that hydrolyzes dTTP and UTP. May have a dual role in cell division arrest and in preventing the incorporation of modified nucleotides into cellular nucleic acids. This chain is dTTP/UTP pyrophosphatase, found in Desulforamulus reducens (strain ATCC BAA-1160 / DSM 100696 / MI-1) (Desulfotomaculum reducens).